Here is a 647-residue protein sequence, read N- to C-terminus: MTALYPAVEPAPAARPARPRSGGWLWTVPSVRWAAAALALFLTGLAAQLLGAPQAVVWTLYLACYVVGGWEPAWVGVRALRNRTLDVDLLMIVAAIGAATIGQVFDGALLIVIFATSGALEDVATTRTERSVRGLLDLAPEHATLLGDGSQRVVAAADLRPGDVIVVRPGERISADGTVIGGASEVDQSSITGEPLPAAKDVGDDVFAGTVNGSGALRVEVTREPSQTVVARIVAMVTEASATKATTQLFIEKIEQRYSAGVVVATLALLTVPLMFGADLRSTLLRAMTFMIVASPCAVVLATMPPLLSAIANASRHGVLVKSAVAMERLADTDVVVLDKTGTLTAGEPVISRVTVLIDGADVLGMAAAAEQFSEHPLGRAIVAAARGRVVPEAGDFTALPGRGVRARVAGHVVEVVSPAAYAGENAAVREHCAAIENDGGTAVVVLEDGLPVGVIGLADRLRPDAPAAVMQLAQLTKHPPMLLTGDNRRAAGRLAEEAGIADVHAELLPDGKAAAVQKLQRDNTHVLVVGDGVNDAPAMAAAHTSIAMGRAGADLTVQTADVVTIRDELATVPAVIALARRARRVVIANLVMAGAAITTLVLWDLFGQLPLPLGVAGHEGSTILVALNGLRLLSNRAWISPGATPT.

5 helical membrane-spanning segments follow: residues 33–53 (WAAAALALFLTGLAAQLLGAP), 55–75 (AVVWTLYLACYVVGGWEPAWV), 94–114 (AAIGAATIGQVFDGALLIVIF), 260–280 (AGVVVATLALLTVPLMFGADL), and 291–311 (MIVASPCAVVLATMPPLLSAI). Catalysis depends on D339, which acts as the 4-aspartylphosphate intermediate. Residues D532 and D536 each coordinate Mg(2+). A helical membrane pass occupies residues 587-607 (VIANLVMAGAAITTLVLWDLF).

The protein belongs to the cation transport ATPase (P-type) (TC 3.A.3) family. Type IB subfamily.

It is found in the cell membrane. The enzyme catalyses Ni(2+)(out) + ATP + H2O = Ni(2+)(in) + ADP + phosphate + H(+). It carries out the reaction Co(2+)(out) + ATP + H2O = Co(2+)(in) + ADP + phosphate + H(+). In terms of biological role, involved in heavy metal homeostasis. Probably exports nickel and cobalt ions out of the cell. In Mycolicibacterium smegmatis (strain ATCC 700084 / mc(2)155) (Mycobacterium smegmatis), this protein is Probable cobalt/nickel-exporting P-type ATPase (ctpD).